A 651-amino-acid polypeptide reads, in one-letter code: Bromodomain-containing protein 7 (651 aa).

Disordered regions lie at residues 36–133 (ELST…EVEQ) and 257–298 (KDKV…KKKD). Residues 58–69 (HKDRKRKKRKKG) are compositionally biased toward basic residues. The short motif at 65-96 (KRKKGEKQVPGEEKEKRKRKVKEDKRKRDREH) is the Nuclear localization signal element. Over residues 70-105 (EKQVPGEEKEKRKRKVKEDKRKRDREHPDSEGEQEL) the composition is skewed to basic and acidic residues. The Bromo domain occupies 131–235 (VEQTPLQEAL…HSGMKILSQE (105 aa)). Residues 271-298 (GSGKDKGEPVDGDTKAFKTPNKEHKKKD) are compositionally biased toward basic and acidic residues. The stretch at 533-564 (SEEAEIFQRKLDETTKLLRELQDAQNERLSTK) forms a coiled coil.

The protein localises to the nucleus. The protein resides in the chromosome. Functionally, acts both as coactivator and as corepressor. May play a role in chromatin remodeling. Participates in the Wnt signaling pathway. Transcriptional corepressor that down-regulates the expression of target genes. Binds to target promoters, leading to increased histone H3 acetylation. Coactivator for TP53-mediated activation of transcription of a set of target genes. Required for TP53-mediated cell-cycle arrest in response to oncogene activation. Inhibits cell cycle progression from G1 to S phase. The chain is Bromodomain-containing protein 7 (BRD7) from Gallus gallus (Chicken).